We begin with the raw amino-acid sequence, 896 residues long: Probable DNA-directed RNA polymerase (896 aa).

Residues aspartate 546, lysine 617, and aspartate 798 contribute to the active site.

This sequence belongs to the phage and mitochondrial RNA polymerase family.

It is found in the mitochondrion. The catalysed reaction is RNA(n) + a ribonucleoside 5'-triphosphate = RNA(n+1) + diphosphate. In terms of biological role, DNA-dependent RNA polymerase catalyzes the transcription of DNA into RNA using the four ribonucleoside triphosphates as substrates. This chain is Probable DNA-directed RNA polymerase, found in Neurospora crassa.